The sequence spans 115 residues: NADH-ubiquinone oxidoreductase chain 3 (115 aa).

The next 3 membrane-spanning stretches (helical) occupy residues 3 to 23, 55 to 75, and 84 to 104; these read FALI…ITFW, FFLV…LLPL, and LPLM…SLAY.

The protein belongs to the complex I subunit 3 family. Core subunit of respiratory chain NADH dehydrogenase (Complex I) which is composed of 45 different subunits. Interacts with TMEM186. Interacts with TMEM242.

It localises to the mitochondrion inner membrane. It carries out the reaction a ubiquinone + NADH + 5 H(+)(in) = a ubiquinol + NAD(+) + 4 H(+)(out). Functionally, core subunit of the mitochondrial membrane respiratory chain NADH dehydrogenase (Complex I) which catalyzes electron transfer from NADH through the respiratory chain, using ubiquinone as an electron acceptor. Essential for the catalytic activity of complex I. This chain is NADH-ubiquinone oxidoreductase chain 3, found in Homo sapiens (Human).